Reading from the N-terminus, the 97-residue chain is Non-pathogenic pore-forming peptide amoebapore A (97 aa).

An N-terminal signal peptide occupies residues 1–20 (MKAIVFVLIFAVAFAVTLRQ). The Saposin B-type domain maps to 21–97 (GPIVCNLCTG…NAICAKIHAC (77 aa)). Intrachain disulfides connect Cys-25-Cys-97, Cys-28-Cys-91, and Cys-55-Cys-66.

As to quaternary structure, monomer. Homodimer. Hexamer; formed during insertion in the membrane.

It localises to the cytoplasmic granule. Its function is as follows. Forms pores in the cell membrane of host cells. Implicated in the cytolytic activity of the parasite. Pore forming activity is lower compared to the activity of ameobapore A from the pathogenic strain HM-1:IMSS. The chain is Non-pathogenic pore-forming peptide amoebapore A from Entamoeba histolytica.